We begin with the raw amino-acid sequence, 137 residues long: S-protein homolog 16 (137 aa).

The first 21 residues, 1–21, serve as a signal peptide directing secretion; it reads MKNLLVFIFVFSLCMFDHVSG. N-linked (GlcNAc...) asparagine glycosylation occurs at Asn-87.

The protein belongs to the plant self-incompatibility (S1) protein family.

Its subcellular location is the secreted. This Arabidopsis thaliana (Mouse-ear cress) protein is S-protein homolog 16.